The sequence spans 744 residues: Polyribonucleotide nucleotidyltransferase (744 aa).

The Mg(2+) site is built by Asp515 and Asp521. One can recognise a KH domain in the interval 581–640 (PRVITVQVPVDKIGEVIGPKGKMINQIQDDTGADISIEDDGTVFIGATDGPSAEAARQAI). The region spanning 652–724 (GERFVGTVVK…PRGKLSLHAV (73 aa)) is the S1 motif domain.

The protein belongs to the polyribonucleotide nucleotidyltransferase family. Requires Mg(2+) as cofactor.

The protein resides in the cytoplasm. The catalysed reaction is RNA(n+1) + phosphate = RNA(n) + a ribonucleoside 5'-diphosphate. Functionally, involved in mRNA degradation. Catalyzes the phosphorolysis of single-stranded polyribonucleotides processively in the 3'- to 5'-direction. This chain is Polyribonucleotide nucleotidyltransferase, found in Beutenbergia cavernae (strain ATCC BAA-8 / DSM 12333 / CCUG 43141 / JCM 11478 / NBRC 16432 / NCIMB 13614 / HKI 0122).